The sequence spans 229 residues: GTP cyclohydrolase 1 (229 aa).

Residues 1–21 are disordered; that stretch reads MTLAKPGSGSQSRMDDKAHFK. Positions 116, 119, and 187 each coordinate Zn(2+).

This sequence belongs to the GTP cyclohydrolase I family. As to quaternary structure, toroid-shaped homodecamer, composed of two pentamers of five dimers.

It catalyses the reaction GTP + H2O = 7,8-dihydroneopterin 3'-triphosphate + formate + H(+). It functions in the pathway cofactor biosynthesis; 7,8-dihydroneopterin triphosphate biosynthesis; 7,8-dihydroneopterin triphosphate from GTP: step 1/1. In Synechococcus sp. (strain JA-2-3B'a(2-13)) (Cyanobacteria bacterium Yellowstone B-Prime), this protein is GTP cyclohydrolase 1.